The primary structure comprises 556 residues: Carotenoid-cleaving dioxygenase, mitochondrial (556 aa).

Fe cation contacts are provided by H203, H263, H334, and H550.

The protein belongs to the carotenoid oxygenase family. Fe(2+) serves as cofactor.

The protein localises to the mitochondrion. It catalyses the reaction all-trans-beta-carotene + O2 = beta-ionone + all-trans-10'-apo-beta-carotenal. The enzyme catalyses 5-cis-lycopene + O2 = 5-cis-10'-apo-lycopenal + (3E,5E)-6,10-dimethylundeca-3,5,9-trien-2-one. The catalysed reaction is 13-cis-lycopene + O2 = 13-cis-10'-apo-lycopenal + (3E,5E)-6,10-dimethylundeca-3,5,9-trien-2-one. It carries out the reaction lutein + O2 = (3R,6R)-hydroxy-alpha-ionone + (3R)-3-hydroxy-10'-apo-beta-carotenal. It catalyses the reaction lutein + O2 = (3R,6R)-3-hydroxy-10'-apo-alpha-carotenal + (3R)-hydroxy-beta-ionone. The enzyme catalyses all-trans-zeaxanthin + 2 O2 = 4,9-dimethyldodeca-2,4,6,8,10-pentaenedial + 2 (3R)-hydroxy-beta-ionone. The catalysed reaction is all-trans-zeaxanthin + O2 = (3R)-3-hydroxy-10'-apo-beta-carotenal + (3R)-hydroxy-beta-ionone. It carries out the reaction beta-cryptoxanthin + O2 = all-trans-10'-apo-beta-carotenal + (3R)-hydroxy-beta-ionone. It catalyses the reaction all-trans-10'-apo-beta-carotenal + O2 = beta-ionone + 4,9-dimethyldodeca-2,4,6,8,10-pentaenedial. The enzyme catalyses (3R)-3-hydroxy-10'-apo-beta-carotenal + O2 = 4,9-dimethyldodeca-2,4,6,8,10-pentaenedial + (3R)-hydroxy-beta-ionone. The catalysed reaction is (3R,6R)-3-hydroxy-10'-apo-alpha-carotenal + O2 = (3R,6R)-hydroxy-alpha-ionone + 4,9-dimethyldodeca-2,4,6,8,10-pentaenedial. Its function is as follows. Broad specificity mitochondrial dioxygenase that mediates the asymmetric oxidative cleavage of carotenoids. Cleaves carotenes (pure hydrocarbon carotenoids) such as all-trans-beta-carotene and lycopene as well as xanthophylls (oxygenated carotenoids) such as zeaxanthin, lutein and beta-cryptoxanthin at both the 9,10 and the 9',10' carbon-carbon double bond. Through its function in carotenoids metabolism regulates oxidative stress and the production of important signaling molecules. The sequence is that of Carotenoid-cleaving dioxygenase, mitochondrial from Macaca fascicularis (Crab-eating macaque).